Here is a 122-residue protein sequence, read N- to C-terminus: Large ribosomal subunit protein uL18 (122 aa).

The segment at Met1–Ala25 is disordered. Positions Gln9 to Leu21 are enriched in basic residues.

It belongs to the universal ribosomal protein uL18 family. Part of the 50S ribosomal subunit; part of the 5S rRNA/L5/L18/L25 subcomplex. Contacts the 5S and 23S rRNAs.

Its function is as follows. This is one of the proteins that bind and probably mediate the attachment of the 5S RNA into the large ribosomal subunit, where it forms part of the central protuberance. The protein is Large ribosomal subunit protein uL18 of Synechococcus sp. (strain CC9311).